The chain runs to 137 residues: Basic phospholipase A2 homolog APL-K49 (137 aa).

A signal peptide spans 1–16 (MRTLWIVALLLVGVEG). 7 cysteine pairs are disulfide-bonded: Cys42/Cys131, Cys44/Cys60, Cys59/Cys111, Cys65/Cys137, Cys66/Cys104, Cys73/Cys97, and Cys91/Cys102. The important for membrane-damaging activities in eukaryotes and bacteria; heparin-binding stretch occupies residues 121–133 (KKYKAYFKLKCKK).

The protein belongs to the phospholipase A2 family. Group II subfamily. K49 sub-subfamily. As to quaternary structure, monomer. Expressed by the venom gland.

Its subcellular location is the secreted. In terms of biological role, snake venom phospholipase A2 (PLA2) that lacks enzymatic activity. Does not show antibacterial activity. Is myotoxic and displays edema-inducing activities. A model of myotoxic mechanism has been proposed: an apo Lys49-PLA2 is activated by the entrance of a hydrophobic molecule (e.g. fatty acid) at the hydrophobic channel of the protein leading to a reorientation of a monomer. This reorientation causes a transition between 'inactive' to 'active' states, causing alignment of C-terminal and membrane-docking sites (MDoS) side-by-side and putting the membrane-disruption sites (MDiS) in the same plane, exposed to solvent and in a symmetric position for both monomers. The MDoS region stabilizes the toxin on membrane by the interaction of charged residues with phospholipid head groups. Subsequently, the MDiS region destabilizes the membrane with penetration of hydrophobic residues. This insertion causes a disorganization of the membrane, allowing an uncontrolled influx of ions (i.e. calcium and sodium), and eventually triggering irreversible intracellular alterations and cell death. The chain is Basic phospholipase A2 homolog APL-K49 from Agkistrodon piscivorus leucostoma (Western cottonmouth).